Reading from the N-terminus, the 150-residue chain is SsrA-binding protein (150 aa).

The protein belongs to the SmpB family.

The protein resides in the cytoplasm. Required for rescue of stalled ribosomes mediated by trans-translation. Binds to transfer-messenger RNA (tmRNA), required for stable association of tmRNA with ribosomes. tmRNA and SmpB together mimic tRNA shape, replacing the anticodon stem-loop with SmpB. tmRNA is encoded by the ssrA gene; the 2 termini fold to resemble tRNA(Ala) and it encodes a 'tag peptide', a short internal open reading frame. During trans-translation Ala-aminoacylated tmRNA acts like a tRNA, entering the A-site of stalled ribosomes, displacing the stalled mRNA. The ribosome then switches to translate the ORF on the tmRNA; the nascent peptide is terminated with the 'tag peptide' encoded by the tmRNA and targeted for degradation. The ribosome is freed to recommence translation, which seems to be the essential function of trans-translation. This Chlamydia caviae (strain ATCC VR-813 / DSM 19441 / 03DC25 / GPIC) (Chlamydophila caviae) protein is SsrA-binding protein.